Here is a 101-residue protein sequence, read N- to C-terminus: Ascorbate-specific PTS system EIIB component (101 aa).

The PTS EIIB type-2 domain maps to 3 to 96 (VRILAVCGNG…KLLEVIKAHF (94 aa)). C9 acts as the Phosphocysteine intermediate in catalysis. Phosphocysteine is present on C9.

The protein localises to the cytoplasm. It carries out the reaction N(pros)-phospho-L-histidyl-[protein] + L-ascorbate(out) = L-ascorbate 6-phosphate(in) + L-histidyl-[protein]. Functionally, the phosphoenolpyruvate-dependent sugar phosphotransferase system (sugar PTS), a major carbohydrate active transport system, catalyzes the phosphorylation of incoming sugar substrates concomitantly with their translocation across the cell membrane. The enzyme II UlaABC PTS system is involved in ascorbate transport. The polypeptide is Ascorbate-specific PTS system EIIB component (ulaB) (Escherichia coli O6:H1 (strain CFT073 / ATCC 700928 / UPEC)).